The following is a 362-amino-acid chain: uncharacterized protein (362 aa).

Disordered stretches follow at residues 1–117 (MASK…GLNR), 153–172 (SSAP…GIRK), and 210–266 (RHFD…SSSN). Positions 12 to 23 (AKKEKEIKKEIE) are enriched in basic and acidic residues. Residues 51–70 (ENDDTDGDGKEEDAQKEDDI) show a composition bias toward acidic residues. Low complexity-rich tracts occupy residues 100–112 (NSPP…TRNT), 153–167 (SSAP…GSPS), and 241–265 (VPPS…TSSS).

This is an uncharacterized protein from Caenorhabditis elegans.